The primary structure comprises 75 residues: Protein TM_1420 (75 aa).

[2Fe-2S] cluster contacts are provided by Cys6, Cys11, Cys39, and Cys43.

[2Fe-2S] cluster is required as a cofactor.

Functionally, might be part of a multi-protein complex, possibly involved in metal cluster assembly. The polypeptide is Protein TM_1420 (Thermotoga maritima (strain ATCC 43589 / DSM 3109 / JCM 10099 / NBRC 100826 / MSB8)).